A 376-amino-acid chain; its full sequence is Putative glutamate--cysteine ligase 2-1 (376 aa).

It belongs to the glutamate--cysteine ligase type 2 family. YbdK subfamily.

It carries out the reaction L-cysteine + L-glutamate + ATP = gamma-L-glutamyl-L-cysteine + ADP + phosphate + H(+). Functionally, ATP-dependent carboxylate-amine ligase which exhibits weak glutamate--cysteine ligase activity. This chain is Putative glutamate--cysteine ligase 2-1, found in Mycobacterium sp. (strain JLS).